Consider the following 263-residue polypeptide: Putative inactive caspase B (263 aa).

Positions 1-8 (MMCEDASD) are cleaved as a propeptide — removed in mature form by cps-1 or ced-3.

It belongs to the peptidase C14A family. In terms of assembly, interacts with ced-3 (via large subunit p17 or small subunit p13); the interaction inhibits ced-3 autoactivation. In terms of processing, cleavage by csp-1 isoform b or ced-3 removes the propeptide and generates subunit p31 in vitro. An additional cleavage at Asp-149 generates the 2 subunits p17 and p14 but this cleavage appears to be less efficient. In terms of tissue distribution, specifically expressed in the hermaphrodite germline.

The protein localises to the cytoplasm. Functionally, putative inactive caspase. In the germline, binds caspase ced-3 zymogen and prevents ced-3 autoactivation. Does not affect the caspase activity of mature ced-3 and ced-4-mediated mature ced-3 activation. Negatively regulates germline apoptosis by inhibiting autocleavage of caspase ced-3. Involved in fertility. Putative inactive caspase. Dispensable for the inhibition of germline apoptosis. The chain is Putative inactive caspase B from Caenorhabditis elegans.